The following is a 100-amino-acid chain: Urease subunit gamma (100 aa).

This sequence belongs to the urease gamma subunit family. In terms of assembly, heterotrimer of UreA (gamma), UreB (beta) and UreC (alpha) subunits. Three heterotrimers associate to form the active enzyme.

The protein localises to the cytoplasm. It carries out the reaction urea + 2 H2O + H(+) = hydrogencarbonate + 2 NH4(+). Its pathway is nitrogen metabolism; urea degradation; CO(2) and NH(3) from urea (urease route): step 1/1. This Azoarcus sp. (strain BH72) protein is Urease subunit gamma.